A 321-amino-acid polypeptide reads, in one-letter code: MIFVYALLALVITFVLVPVLIPTLKRMKFGQSIREEGPQSHMKKTGTPTMGGLTFLLSIVITSLVAIIFVDQANPIILLLFVTIGFGLIGFIDDYIIVVKKNNQGLTSKQKFLAQIGIAIIFFVLSNVFHLVNFSTSIHIPFTNVAIPLSFAYVIFIVFWQVGFSNAVNLTDGLDGLATGLSIIGFTMYAIMSFVLGETAIGIFCIIMLFALLGFLPYNINPAKVFMGDTGSLALGGIFATISIMLNQELSLIFIGLVFVIETLSVMLQVASFKLTGKRIFKMSPIHHHFELIGWSEWKVVTVFWAVGLISGLIGLWIGVH.

The next 10 helical transmembrane spans lie at 1 to 21, 50 to 70, 76 to 96, 112 to 132, 140 to 160, 176 to 196, 200 to 220, 225 to 245, 250 to 270, and 300 to 320; these read MIFVYALLALVITFVLVPVLI, MGGLTFLLSIVITSLVAIIFV, IILLLFVTIGFGLIGFIDDYI, FLAQIGIAIIFFVLSNVFHLV, IPFTNVAIPLSFAYVIFIVFW, GLATGLSIIGFTMYAIMSFVL, AIGIFCIIMLFALLGFLPYNI, VFMGDTGSLALGGIFATISIM, LSLIFIGLVFVIETLSVMLQV, and VVTVFWAVGLISGLIGLWIGV.

This sequence belongs to the glycosyltransferase 4 family. MraY subfamily. Mg(2+) is required as a cofactor.

Its subcellular location is the cell membrane. The catalysed reaction is UDP-N-acetyl-alpha-D-muramoyl-L-alanyl-gamma-D-glutamyl-L-lysyl-D-alanyl-D-alanine + di-trans,octa-cis-undecaprenyl phosphate = Mur2Ac(oyl-L-Ala-gamma-D-Glu-L-Lys-D-Ala-D-Ala)-di-trans,octa-cis-undecaprenyl diphosphate + UMP. The protein operates within cell wall biogenesis; peptidoglycan biosynthesis. Functionally, catalyzes the initial step of the lipid cycle reactions in the biosynthesis of the cell wall peptidoglycan: transfers peptidoglycan precursor phospho-MurNAc-pentapeptide from UDP-MurNAc-pentapeptide onto the lipid carrier undecaprenyl phosphate, yielding undecaprenyl-pyrophosphoryl-MurNAc-pentapeptide, known as lipid I. This Staphylococcus aureus (strain Mu50 / ATCC 700699) protein is Phospho-N-acetylmuramoyl-pentapeptide-transferase.